Consider the following 276-residue polypeptide: Proteasome subunit beta type-8 (276 aa).

Positions 1–33 (MALLDVCGAPRGQRPESALPVAGSGRRSDPGHY) are disordered. Positions 1-72 (MALLDVCGAP…RNVQIEMAHG (72 aa)) are cleaved as a propeptide — removed in mature form. Asp5 bears the Phosphothreonine mark. The active-site Nucleophile is the Thr73.

The protein belongs to the peptidase T1B family. As to quaternary structure, the 26S proteasome consists of a 20S proteasome core and two 19S regulatory subunits. The 20S proteasome core is composed of 28 subunits that are arranged in four stacked rings, resulting in a barrel-shaped structure. The two end rings are each formed by seven alpha subunits, and the two central rings are each formed by seven beta subunits. The catalytic chamber with the active sites is on the inside of the barrel. Component of the immunoproteasome, where it displaces the equivalent housekeeping subunit PSMB5. Component of the spermatoproteasome, a form of the proteasome specifically found in testis. Directly interacts with POMP. Interacts with TAP1. In terms of assembly, (Microbial infection) Interacts with HIV-1 TAT protein. In terms of processing, autocleaved. The resulting N-terminal Thr residue of the mature subunit is responsible for the nucleophile proteolytic activity.

It localises to the cytoplasm. It is found in the nucleus. The enzyme catalyses Cleavage of peptide bonds with very broad specificity.. Its function is as follows. The proteasome is a multicatalytic proteinase complex which is characterized by its ability to cleave peptides with Arg, Phe, Tyr, Leu, and Glu adjacent to the leaving group at neutral or slightly basic pH. The proteasome has an ATP-dependent proteolytic activity. This subunit is involved in antigen processing to generate class I binding peptides. Replacement of PSMB5 by PSMB8 increases the capacity of the immunoproteasome to cleave model peptides after hydrophobic and basic residues. Involved in the generation of spliced peptides resulting from the ligation of two separate proteasomal cleavage products that are not contiguous in the parental protein. Acts as a major component of interferon gamma-induced sensitivity. Plays a key role in apoptosis via the degradation of the apoptotic inhibitor MCL1. May be involved in the inflammatory response pathway. In cancer cells, substitution of isoform 1 (E2) by isoform 2 (E1) results in immunoproteasome deficiency. Required for the differentiation of preadipocytes into adipocytes. The chain is Proteasome subunit beta type-8 (PSMB8) from Homo sapiens (Human).